The following is a 160-amino-acid chain: Small RNA binding protein 1 (160 aa).

One can recognise an RRM domain in the interval 8 to 86 (FRCFVGGLAW…RNITVNEAQQ (79 aa)). The tract at residues 82-160 (NEAQQRGGGG…GGGSEGGWRN (79 aa)) is disordered. Residues 87–160 (RGGGGGGGYN…GGGSEGGWRN (74 aa)) are compositionally biased toward gly residues. A glycine-rich (GR) required for cell-to-cell movement region spans residues 88–157 (GGGGGGGYNR…GSGGGGSEGG (70 aa)).

It belongs to the GR-RBP family. In terms of assembly, binds to small phloem-mobile single-stranded RNAs (ss-sRNA, e.g. small interfering RNA (siRNA) and microRNA (miRNA)) in the phloeme exudate, including viral-derived sRNA (vsiRNA). As to expression, accumulates in phloem exudates.

The protein localises to the secreted. In terms of biological role, possibly has a role in RNA transcription or processing during stress. Binds sequence non-specifically to RNAs and DNAs. Mediates cell-to-cell trafficking of RNA interference (RNAi) signals (small RNAs (sRNA), e.g. small interfering RNA (siRNA) and microRNA (miRNA)) which regulate growth and development, as well as responses to environmental inputs, including pathogen attack; can compromise zucchini yellow mosaic virus (ZYMV) and tobacco rattle virus (TRV) infections at the early stage. The polypeptide is Small RNA binding protein 1 (Cucumis sativus (Cucumber)).